Consider the following 461-residue polypeptide: 3-oxoacyl-[acyl-carrier-protein] synthase, mitochondrial (461 aa).

The N-terminal 28 residues, 1–28, are a transit peptide targeting the mitochondrion; it reads MATSNLRRHLSASRLRLNRFISTSSSYH. The Ketosynthase family 3 (KS3) domain occupies 30 to 460; it reads HRRVVVTGLG…GTNASLLFAS (431 aa). Catalysis depends on for beta-ketoacyl synthase activity residues C209, H350, and H389.

The protein belongs to the thiolase-like superfamily. Beta-ketoacyl-ACP synthases family. As to quaternary structure, homodimer. In terms of tissue distribution, expressed at the same level in leaves, roots, siliques and flowers.

It is found in the mitochondrion. The catalysed reaction is a fatty acyl-[ACP] + malonyl-[ACP] + H(+) = a 3-oxoacyl-[ACP] + holo-[ACP] + CO2. It carries out the reaction butanoyl-[ACP] + malonyl-[ACP] + H(+) = 3-oxohexanoyl-[ACP] + holo-[ACP] + CO2. It catalyses the reaction hexanoyl-[ACP] + malonyl-[ACP] + H(+) = 3-oxooctanoyl-[ACP] + holo-[ACP] + CO2. The enzyme catalyses octanoyl-[ACP] + malonyl-[ACP] + H(+) = 3-oxodecanoyl-[ACP] + holo-[ACP] + CO2. The catalysed reaction is decanoyl-[ACP] + malonyl-[ACP] + H(+) = 3-oxododecanoyl-[ACP] + holo-[ACP] + CO2. It carries out the reaction dodecanoyl-[ACP] + malonyl-[ACP] + H(+) = 3-oxotetradecanoyl-[ACP] + holo-[ACP] + CO2. It catalyses the reaction tetradecanoyl-[ACP] + malonyl-[ACP] + H(+) = 3-oxohexadecanoyl-[ACP] + holo-[ACP] + CO2. The enzyme catalyses hexadecanoyl-[ACP] + malonyl-[ACP] + H(+) = 3-oxooctadecanoyl-[ACP] + holo-[ACP] + CO2. It participates in lipid metabolism; fatty acid biosynthesis. Its activity is regulated as follows. Inhibited by cerulenin. Functionally, catalyzes all the condensation reaction of fatty acid synthesis by the addition to an acyl acceptor of two carbons from malonyl-ACP. Able to elongate saturated acyl chains from 4 to at least 16 carbons. Uses malonyl-CoA but not acetyl-CoA as primer substrate. When expressed in a heterologous system, reveals a bimodal distribution of products, with peaks at C8 and C14-C16. The major product of the reaction (octanoyl-ACP) is required for the lipoylation of essential mitochondrial proteins. Required for mitochondrial fatty acid synthesis (mtFAS). MtFAS are essential for photorespiration and plant development, probably by influencing mitochondrial membrane lipid composition and other lipid metabolic pathways. In Arabidopsis thaliana (Mouse-ear cress), this protein is 3-oxoacyl-[acyl-carrier-protein] synthase, mitochondrial.